The primary structure comprises 384 residues: Gastrin-releasing peptide receptor (384 aa).

The Extracellular segment spans residues 1–38 (MALNDCFLLNLEVDHFMHCNISSHSADLPVNDDWSHPG). N-linked (GlcNAc...) asparagine glycosylation occurs at Asn-20. The helical transmembrane segment at 39–62 (ILYVIPAVYGVIILIGLIGNITLI) threads the bilayer. Over 63 to 76 (KIFCTVKSMRNVPN) the chain is Cytoplasmic. Residues 77 to 96 (LFISSLALGDLLLLITCAPV) form a helical membrane-spanning segment. At 97–114 (DASRYLADRWLFGRIGCK) the chain is on the extracellular side. Cys-113 and Cys-196 form a disulfide bridge. Residues 115 to 136 (LIPFIQLTSVGVSVFTLTALSA) traverse the membrane as a helical segment. Residues 137–152 (DRYKAIVRPMDIQASH) are Cytoplasmic-facing. A helical membrane pass occupies residues 153-174 (ALMKICLKAAFIWIISMLLAIP). The Extracellular portion of the chain corresponds to 175–208 (EAVFSDLHPFHEESTNQTFISCAPYPHSNELHPK). The chain crosses the membrane as a helical span at residues 209–234 (IHSMASFLVFYVIPLSIISVYYYFIA). Over 235-264 (KNLIQSAYNLPVEGNIHVKKQIESRKRLAK) the chain is Cytoplasmic. The helical transmembrane segment at 265-285 (TVLVFVGLFAFCWLPNHVIYL) threads the bilayer. Residues 286–298 (YRSYHYSEVDTSM) are Extracellular-facing. Residues 299–325 (LHFVTSICARLLAFTNSCVNPFALYLL) form a helical membrane-spanning segment. The Cytoplasmic portion of the chain corresponds to 326–384 (SKSFRKQFNTQLLCCQPGLIIRSHSTGRSTTCMTSLKSTNPSVATFSLINGNICHERYV). A lipid anchor (S-palmitoyl cysteine) is attached at Cys-339. A Phosphoserine modification is found at Ser-350.

Belongs to the G-protein coupled receptor 1 family. As to expression, highly expressed in pancreas. Also expressed in stomach, adrenal cortex and brain. In brain, expressed in cells throughout the cortex.

The protein resides in the cell membrane. Receptor for gastrin-releasing peptide (GRP). Signals via association with G proteins that activate a phosphatidylinositol-calcium second messenger system, resulting in Akt phosphorylation. Contributes to the regulation of food intake. Contributes to the perception of prurient stimuli and transmission of itch signals in the spinal cord that promote scratching behavior, but does not play a role in the perception of pain. Contributes primarily to nonhistaminergic itch sensation. In one study, shown to act in the amygdala as part of an inhibitory network which inhibits memory specifically related to learned fear. In another study, shown to contribute to disinhibition of glutamatergic cells in the auditory cortex via signaling on vasoactive intestinal peptide-expressing cells which leads to enhanced auditory fear memories. Contributes to the induction of sighing through signaling in the pre-Botzinger complex, a cluster of several thousand neurons in the ventrolateral medulla responsible for inspiration during respiratory activity. The protein is Gastrin-releasing peptide receptor (GRPR) of Homo sapiens (Human).